We begin with the raw amino-acid sequence, 361 residues long: Oxidoreductase lepF (361 aa).

A helical membrane pass occupies residues 257–277 (MLMLVLQAVLLPVFYVVAMPL).

It belongs to the NmrA-type oxidoreductase family.

The protein localises to the membrane. In terms of biological role, oxidoreductase; part of the gene cluster 23 that mediates the biosynthesis of a family of 2-pyridones known as leporins. The hybrid PKS-NRPS synthetase lepA and the enoyl reductase lepG are responsible for fusion of phenylalanine with a hexaketide and subsequent release of the stable tetramic acid precursor, pre-leporin C. Because lepA lacks a designated enoylreductase (ER) domain, the required activity is provided the enoyl reductase lepG. It is possible that the dehydrogenase lepF also participates in production of pre-leporin C. Cytochrome P450 monooxygenase lepH is then required for the ring expansion step to yield leporin C. Leporin C is then presumably further oxidized by the N-hydroxylase lepD to form leporin B. LepI may possess a function in biosynthesis upstream of lepA. Leporin B is further oxidized in the presence of ferric ion to give the leporin B trimer-iron chelate, but whether or not this reaction is catalyzed by an enzyme in the pathway or by ferric ion is not determined yet. The protein is Oxidoreductase lepF of Aspergillus flavus (strain ATCC 200026 / FGSC A1120 / IAM 13836 / NRRL 3357 / JCM 12722 / SRRC 167).